The primary structure comprises 498 residues: ATP synthase subunit beta, chloroplastic (498 aa).

Residue threonine 6 is modified to Phosphothreonine. Serine 13 carries the post-translational modification Phosphoserine. Position 172–179 (172–179 (GGAGVGKT)) interacts with ATP.

The protein belongs to the ATPase alpha/beta chains family. F-type ATPases have 2 components, CF(1) - the catalytic core - and CF(0) - the membrane proton channel. CF(1) has five subunits: alpha(3), beta(3), gamma(1), delta(1), epsilon(1). CF(0) has four main subunits: a(1), b(1), b'(1) and c(9-12).

Its subcellular location is the plastid. The protein resides in the chloroplast thylakoid membrane. The enzyme catalyses ATP + H2O + 4 H(+)(in) = ADP + phosphate + 5 H(+)(out). In terms of biological role, produces ATP from ADP in the presence of a proton gradient across the membrane. The catalytic sites are hosted primarily by the beta subunits. The protein is ATP synthase subunit beta, chloroplastic of Olimarabidopsis pumila (Dwarf rocket).